The chain runs to 498 residues: Glycerol kinase (498 aa).

Position 12 (Thr12) interacts with ADP. The ATP site is built by Thr12, Thr13, and Ser14. Thr12 contributes to the sn-glycerol 3-phosphate binding site. Residue Arg16 participates in ADP binding. Residues Arg82, Glu83, Tyr134, and Asp241 each contribute to the sn-glycerol 3-phosphate site. Glycerol-binding residues include Arg82, Glu83, Tyr134, Asp241, and Gln242. Residues Thr263 and Gly310 each contribute to the ADP site. Residues Thr263, Gly310, Gln314, and Gly411 each contribute to the ATP site. Positions 411 and 415 each coordinate ADP.

It belongs to the FGGY kinase family.

It catalyses the reaction glycerol + ATP = sn-glycerol 3-phosphate + ADP + H(+). It functions in the pathway polyol metabolism; glycerol degradation via glycerol kinase pathway; sn-glycerol 3-phosphate from glycerol: step 1/1. With respect to regulation, inhibited by fructose 1,6-bisphosphate (FBP). Functionally, key enzyme in the regulation of glycerol uptake and metabolism. Catalyzes the phosphorylation of glycerol to yield sn-glycerol 3-phosphate. The chain is Glycerol kinase from Herminiimonas arsenicoxydans.